Consider the following 687-residue polypeptide: Guanine-nucleotide exchange factor YEL1 (687 aa).

Residues 14 to 27 (YGVSQKGYNDNFSE) are compositionally biased toward polar residues. 2 disordered regions span residues 14 to 35 (YGVS…LHGS) and 63 to 97 (AAND…TDQN). The SEC7 domain maps to 57–264 (ILQNKEAAND…SEYYKTLNET (208 aa)). Positions 73–83 (TTDTATAGTGT) are enriched in low complexity. Residue T290 is modified to Phosphothreonine. S293 and S299 each carry phosphoserine. Residues 412–551 (ASRRTSLSYL…DCINFWAGRI (140 aa)) enclose the PH domain.

Belongs to the YEL1 family.

It localises to the cytoplasm. The protein localises to the cell membrane. It is found in the bud neck. The protein resides in the bud tip. Functionally, guanine nucleotide exchange factor for ARF3 required for localization of ARF3 to the bud neck and tip and involved in actin patch polarization. The sequence is that of Guanine-nucleotide exchange factor YEL1 (YEL1) from Saccharomyces cerevisiae (strain RM11-1a) (Baker's yeast).